We begin with the raw amino-acid sequence, 172 residues long: Adenine phosphoribosyltransferase (172 aa).

This sequence belongs to the purine/pyrimidine phosphoribosyltransferase family. As to quaternary structure, homodimer.

The protein localises to the cytoplasm. The catalysed reaction is AMP + diphosphate = 5-phospho-alpha-D-ribose 1-diphosphate + adenine. It participates in purine metabolism; AMP biosynthesis via salvage pathway; AMP from adenine: step 1/1. Its function is as follows. Catalyzes a salvage reaction resulting in the formation of AMP, that is energically less costly than de novo synthesis. The protein is Adenine phosphoribosyltransferase of Levilactobacillus brevis (strain ATCC 367 / BCRC 12310 / CIP 105137 / JCM 1170 / LMG 11437 / NCIMB 947 / NCTC 947) (Lactobacillus brevis).